We begin with the raw amino-acid sequence, 311 residues long: Eukaryotic translation initiation factor 3 subunit E (311 aa).

In terms of domain architecture, PCI spans 100–280 (VYYNYPKGRD…MGVKSVSIHE (181 aa)).

It belongs to the eIF-3 subunit E family. In terms of assembly, component of the eukaryotic translation initiation factor 3 (eIF-3) complex.

It is found in the cytoplasm. Its function is as follows. Component of the eukaryotic translation initiation factor 3 (eIF-3) complex, which is involved in protein synthesis of a specialized repertoire of mRNAs and, together with other initiation factors, stimulates binding of mRNA and methionyl-tRNAi to the 40S ribosome. The eIF-3 complex specifically targets and initiates translation of a subset of mRNAs involved in cell proliferation. The polypeptide is Eukaryotic translation initiation factor 3 subunit E (Caenorhabditis briggsae).